A 440-amino-acid polypeptide reads, in one-letter code: Protein dumpy-20 (440 aa).

Positions 96 to 119 (ILSDPSLHGSNSSSSTSDVGSSVD) are disordered. Over residues 98–119 (SDPSLHGSNSSSSTSDVGSSVD) the composition is skewed to low complexity. 2 consecutive BED-type zinc fingers follow at residues 137–186 (PTEN…YQKV) and 350–399 (KTEH…YNDV). Zn(2+)-binding residues include Cys-156, Cys-159, His-174, His-179, Cys-369, Cys-372, His-387, and His-392.

Functionally, may be directly or indirectly involved in cuticle function. The chain is Protein dumpy-20 (dpy-20) from Caenorhabditis elegans.